The chain runs to 202 residues: Small ribosomal subunit protein uS4 (202 aa).

Residues 22-43 are disordered; the sequence is TRKSARRAYPPGQHGQNRRKRS. One can recognise an S4 RNA-binding domain in the interval 90–152; that stretch reads MRLDNTVFRL…EKSKEMVKTN (63 aa).

This sequence belongs to the universal ribosomal protein uS4 family. In terms of assembly, part of the 30S ribosomal subunit. Contacts protein S5. The interaction surface between S4 and S5 is involved in control of translational fidelity.

One of the primary rRNA binding proteins, it binds directly to 16S rRNA where it nucleates assembly of the body of the 30S subunit. In terms of biological role, with S5 and S12 plays an important role in translational accuracy. This chain is Small ribosomal subunit protein uS4, found in Trichodesmium erythraeum (strain IMS101).